The sequence spans 100 residues: Large ribosomal subunit protein uL23 (100 aa).

This sequence belongs to the universal ribosomal protein uL23 family. Part of the 50S ribosomal subunit. Contacts protein L29, and trigger factor when it is bound to the ribosome.

One of the early assembly proteins it binds 23S rRNA. One of the proteins that surrounds the polypeptide exit tunnel on the outside of the ribosome. Forms the main docking site for trigger factor binding to the ribosome. This chain is Large ribosomal subunit protein uL23, found in Salmonella paratyphi A (strain ATCC 9150 / SARB42).